A 339-amino-acid polypeptide reads, in one-letter code: Serpentine receptor class alpha-22 (339 aa).

6 helical membrane passes run 33–53, 110–130, 150–170, 199–219, 250–270, and 284–304; these read IFIS…IQAL, VVDL…VFSL, FIAI…FYIA, VRTM…YLSV, IFII…NLLL, and IALF…VIYF.

The protein belongs to the nematode receptor-like protein sra family.

The protein resides in the membrane. In Caenorhabditis elegans, this protein is Serpentine receptor class alpha-22 (sra-22).